The primary structure comprises 167 residues: SsrA-binding protein (167 aa).

Residues 137–167 (GKQSHDKRDAAKERDWQRDKQRVMRRHNRDA) are disordered. The segment covering 139 to 158 (QSHDKRDAAKERDWQRDKQR) has biased composition (basic and acidic residues).

Belongs to the SmpB family.

It localises to the cytoplasm. Required for rescue of stalled ribosomes mediated by trans-translation. Binds to transfer-messenger RNA (tmRNA), required for stable association of tmRNA with ribosomes. tmRNA and SmpB together mimic tRNA shape, replacing the anticodon stem-loop with SmpB. tmRNA is encoded by the ssrA gene; the 2 termini fold to resemble tRNA(Ala) and it encodes a 'tag peptide', a short internal open reading frame. During trans-translation Ala-aminoacylated tmRNA acts like a tRNA, entering the A-site of stalled ribosomes, displacing the stalled mRNA. The ribosome then switches to translate the ORF on the tmRNA; the nascent peptide is terminated with the 'tag peptide' encoded by the tmRNA and targeted for degradation. The ribosome is freed to recommence translation, which seems to be the essential function of trans-translation. This chain is SsrA-binding protein, found in Xanthomonas campestris pv. campestris (strain 8004).